Reading from the N-terminus, the 363-residue chain is Caffeic acid 3-O-methyltransferase (363 aa).

Methionine 130 to leucine 136 provides a ligand contact to substrate. Positions alanine 162–methionine 180 are substrate binding. S-adenosyl-L-methionine contacts are provided by glycine 208, aspartate 231, aspartate 251, methionine 252, and lysine 265. The active-site Proton acceptor is histidine 269.

The protein belongs to the class I-like SAM-binding methyltransferase superfamily. Cation-independent O-methyltransferase family. COMT subfamily. As to quaternary structure, homodimer.

The catalysed reaction is (E)-caffeate + S-adenosyl-L-methionine = (E)-ferulate + S-adenosyl-L-homocysteine + H(+). Its pathway is aromatic compound metabolism; phenylpropanoid biosynthesis. Catalyzes the conversion of caffeic acid to ferulic acid and of 5-hydroxyferulic acid to sinapic acid. The resulting products may subsequently be converted to the corresponding alcohols that are incorporated into lignins. The protein is Caffeic acid 3-O-methyltransferase (COMT1) of Catharanthus roseus (Madagascar periwinkle).